The sequence spans 818 residues: Actin filament-associated protein 1-like 2 (818 aa).

Tyr-56 is modified (phosphotyrosine). Residues Gln-66 to Trp-163 are disordered. A compositionally biased stretch (polar residues) spans Glu-85–Gln-94. Acidic residues predominate over residues Tyr-123–Glu-139. PH domains are found at residues Asp-175–Gly-271 and Ser-353–Gly-447. Residue Ser-408 is modified to Phosphoserine. Position 413 is a phosphotyrosine (Tyr-413). Phosphoserine is present on Ser-484. The tract at residues Ala-513 to Glu-532 is disordered. Positions Ala-652–Ala-749 form a coiled coil. The tract at residues Asn-765 to Ala-787 is disordered.

In terms of assembly, interacts with SRC. Interacts with LCK when tyrosine phosphorylated. In terms of processing, tyrosine phosphorylated (by SRC). Detected in spleen and thyroid, and at lower levels in kidney, brain, lung and pancreas.

The protein resides in the cytoplasm. Its function is as follows. May play a role in a signaling cascade by enhancing the kinase activity of SRC. Contributes to SRC-regulated transcription activation. This chain is Actin filament-associated protein 1-like 2 (AFAP1L2), found in Homo sapiens (Human).